The primary structure comprises 357 residues: MSQSGKNGLTYSDAGVDIDAGNLLVEKIKPAVRSTRRPGADGEIGGFGGLFDLKAAGFTDPVLVAANDGVGTKLKIAIDADYHDTVGIDLVAMCVNDLVVQGAEPLFFLDYFATGKLDPDQGAAIVGGIAAGCREAGCALIGGETAEMPGMYSSGDYDLAGFAVGAAERGKLLPSGDIAEGDVILGLASSGVHSNGFSLVRKIVELSGLDWDSPAPFTEDKKLGEALLEPTRIYVKPLLKAIRETGAIKALAHITGGGFPENIPRVLPKHLAAEIDLATVKVPPVFSWLAKTGGVEAKEMLRTFNCGVGMIAVVAGENVATVSAALEAEGETVITLGRMIAREEGAAGTVYKGTLAI.

The protein belongs to the AIR synthase family.

The protein localises to the cytoplasm. It catalyses the reaction 2-formamido-N(1)-(5-O-phospho-beta-D-ribosyl)acetamidine + ATP = 5-amino-1-(5-phospho-beta-D-ribosyl)imidazole + ADP + phosphate + H(+). Its pathway is purine metabolism; IMP biosynthesis via de novo pathway; 5-amino-1-(5-phospho-D-ribosyl)imidazole from N(2)-formyl-N(1)-(5-phospho-D-ribosyl)glycinamide: step 2/2. The chain is Phosphoribosylformylglycinamidine cyclo-ligase from Rhizobium johnstonii (strain DSM 114642 / LMG 32736 / 3841) (Rhizobium leguminosarum bv. viciae).